The following is a 266-amino-acid chain: PTS system sorbose-specific EIIC component (266 aa).

Positions Met-1–Ile-237 constitute a PTS EIIC type-4 domain. Transmembrane regions (helical) follow at residues Ile-3–Val-23, Leu-33–Gly-53, Ile-79–Ala-99, Leu-100–Phe-120, Val-151–Leu-171, Gln-183–Val-203, and Tyr-219–Ile-239.

Its subcellular location is the cell inner membrane. The phosphoenolpyruvate-dependent sugar phosphotransferase system (PTS), a major carbohydrate active transport system, catalyzes the phosphorylation of incoming sugar substrates concomitant with their translocation across the cell membrane. The enzyme II SorABFM PTS system is involved in L-sorbose transport. The sequence is that of PTS system sorbose-specific EIIC component from Klebsiella pneumoniae.